Reading from the N-terminus, the 179-residue chain is Large ribosomal subunit protein uL6 (179 aa).

The protein belongs to the universal ribosomal protein uL6 family. Part of the 50S ribosomal subunit.

In terms of biological role, this protein binds to the 23S rRNA, and is important in its secondary structure. It is located near the subunit interface in the base of the L7/L12 stalk, and near the tRNA binding site of the peptidyltransferase center. This is Large ribosomal subunit protein uL6 from Methylacidiphilum infernorum (isolate V4) (Methylokorus infernorum (strain V4)).